The chain runs to 108 residues: MSDILDRLAEILEARKQASPDASYVARLYAKGTDAILKKIGEEATETVMAAKDDQAEKIIYEVADLWFHTLVLLAHKGLKPADVLEELARREGLSGLTEKANRQGGST.

It belongs to the PRA-PH family.

Its subcellular location is the cytoplasm. It carries out the reaction 1-(5-phospho-beta-D-ribosyl)-ATP + H2O = 1-(5-phospho-beta-D-ribosyl)-5'-AMP + diphosphate + H(+). It participates in amino-acid biosynthesis; L-histidine biosynthesis; L-histidine from 5-phospho-alpha-D-ribose 1-diphosphate: step 2/9. This chain is Phosphoribosyl-ATP pyrophosphatase, found in Thiobacillus denitrificans (strain ATCC 25259 / T1).